Reading from the N-terminus, the 261-residue chain is Proteasome subunit beta type-2 (261 aa).

Residues 1-29 constitute a propeptide, removed in mature form; that stretch reads MAGLSFDNYQRNNFLAENSHTQPKATSTG. Residue Thr-30 is the Nucleophile of the active site.

Belongs to the peptidase T1B family. As to quaternary structure, the 26S proteasome consists of a 20S proteasome core and two 19S regulatory subunits. The 20S proteasome core is composed of 28 subunits that are arranged in four stacked rings, resulting in a barrel-shaped structure. The two end rings are each formed by seven alpha subunits, and the two central rings are each formed by seven beta subunits. The catalytic chamber with the active sites is on the inside of the barrel.

It localises to the cytoplasm. The protein resides in the nucleus. The catalysed reaction is Cleavage of peptide bonds with very broad specificity.. The proteasome degrades poly-ubiquitinated proteins in the cytoplasm and in the nucleus. It is essential for the regulated turnover of proteins and for the removal of misfolded proteins. The proteasome is a multicatalytic proteinase complex that is characterized by its ability to cleave peptides with Arg, Phe, Tyr, Leu, and Glu adjacent to the leaving group at neutral or slightly basic pH. It has an ATP-dependent proteolytic activity. This Saccharomyces cerevisiae (strain ATCC 204508 / S288c) (Baker's yeast) protein is Proteasome subunit beta type-2 (PUP1).